A 580-amino-acid polypeptide reads, in one-letter code: Protein O-linked-mannose beta-1,4-N-acetylglucosaminyltransferase 2 (580 aa).

Residues 1 to 4 (MHLS) lie on the Cytoplasmic side of the membrane. Residues 5-25 (AVFNALLVSVLAAVLWKHVRL) form a helical; Signal-anchor for type II membrane protein membrane-spanning segment. Residues 26–580 (REHAATLEEE…PFADVLVCST (555 aa)) are Lumenal-facing. Asn-99 and Asn-276 each carry an N-linked (GlcNAc...) asparagine glycan. The Fibronectin type-III domain occupies 488-580 (ARCQASVQGA…PFADVLVCST (93 aa)).

The protein belongs to the glycosyltransferase 61 family. As to expression, mainly expressed in the central nervous system.

The protein localises to the endoplasmic reticulum membrane. It catalyses the reaction 3-O-(alpha-D-mannosyl)-L-threonyl-[protein] + UDP-N-acetyl-alpha-D-glucosamine = 3-O-(N-acetyl-beta-D-glucosaminyl-(1-&gt;4)-alpha-D-mannosyl)-L-threonyl-[protein] + UDP + H(+). Its pathway is protein modification; protein glycosylation. O-linked mannose beta-1,4-N-acetylglucosaminyltransferase that transfers UDP-N-acetyl-D-glucosamine to the 4-position of the mannose to generate N-acetyl-D-glucosamine-beta-1,4-O-D-mannosylprotein. Involved in the biosynthesis of the phosphorylated O-mannosyl trisaccharide (N-acetylgalactosamine-beta-3-N-acetylglucosamine-beta-4-(phosphate-6-)mannose), a carbohydrate structure present in alpha-dystroglycan (DAG1), which is required for binding laminin G-like domain-containing extracellular proteins with high affinity. This Mus musculus (Mouse) protein is Protein O-linked-mannose beta-1,4-N-acetylglucosaminyltransferase 2 (Pomgnt2).